The sequence spans 117 residues: DNA-directed RNA polymerase subunit omega (117 aa).

It belongs to the RNA polymerase subunit omega family. The RNAP catalytic core consists of 2 alpha, 1 beta, 1 beta' and 1 omega subunit. When a sigma factor is associated with the core the holoenzyme is formed, which can initiate transcription.

The enzyme catalyses RNA(n) + a ribonucleoside 5'-triphosphate = RNA(n+1) + diphosphate. Promotes RNA polymerase assembly. Latches the N- and C-terminal regions of the beta' subunit thereby facilitating its interaction with the beta and alpha subunits. This is DNA-directed RNA polymerase subunit omega from Cereibacter sphaeroides (strain ATCC 17029 / ATH 2.4.9) (Rhodobacter sphaeroides).